We begin with the raw amino-acid sequence, 286 residues long: ATP synthase gamma chain (286 aa).

Belongs to the ATPase gamma chain family. F-type ATPases have 2 components, CF(1) - the catalytic core - and CF(0) - the membrane proton channel. CF(1) has five subunits: alpha(3), beta(3), gamma(1), delta(1), epsilon(1). CF(0) has three main subunits: a, b and c.

It localises to the cell inner membrane. Produces ATP from ADP in the presence of a proton gradient across the membrane. The gamma chain is believed to be important in regulating ATPase activity and the flow of protons through the CF(0) complex. This chain is ATP synthase gamma chain, found in Flavobacterium psychrophilum (strain ATCC 49511 / DSM 21280 / CIP 103535 / JIP02/86).